Consider the following 306-residue polypeptide: Ribosomal protein L11 methyltransferase (306 aa).

T152, G179, D201, and N243 together coordinate S-adenosyl-L-methionine.

The protein belongs to the methyltransferase superfamily. PrmA family.

Its subcellular location is the cytoplasm. It catalyses the reaction L-lysyl-[protein] + 3 S-adenosyl-L-methionine = N(6),N(6),N(6)-trimethyl-L-lysyl-[protein] + 3 S-adenosyl-L-homocysteine + 3 H(+). Functionally, methylates ribosomal protein L11. The polypeptide is Ribosomal protein L11 methyltransferase (Citrifermentans bemidjiense (strain ATCC BAA-1014 / DSM 16622 / JCM 12645 / Bem) (Geobacter bemidjiensis)).